The chain runs to 202 residues: Pyridoxal 5'-phosphate synthase subunit PdxT (202 aa).

L-glutamine is bound at residue 50-52 (GES). The active-site Nucleophile is the C82. L-glutamine is bound by residues R111 and 140–141 (IR). Residues H176 and E178 each act as charge relay system in the active site.

The protein belongs to the glutaminase PdxT/SNO family. In the presence of PdxS, forms a dodecamer of heterodimers. Only shows activity in the heterodimer.

It carries out the reaction aldehydo-D-ribose 5-phosphate + D-glyceraldehyde 3-phosphate + L-glutamine = pyridoxal 5'-phosphate + L-glutamate + phosphate + 3 H2O + H(+). The catalysed reaction is L-glutamine + H2O = L-glutamate + NH4(+). It participates in cofactor biosynthesis; pyridoxal 5'-phosphate biosynthesis. In terms of biological role, catalyzes the hydrolysis of glutamine to glutamate and ammonia as part of the biosynthesis of pyridoxal 5'-phosphate. The resulting ammonia molecule is channeled to the active site of PdxS. The protein is Pyridoxal 5'-phosphate synthase subunit PdxT of Streptomyces coelicolor (strain ATCC BAA-471 / A3(2) / M145).